The sequence spans 469 residues: 1-aminocyclopropane-1-carboxylate synthase 3 (469 aa).

Lys-272 carries the post-translational modification N6-(pyridoxal phosphate)lysine. The segment at 432-452 (APNATNHQNQQQSNANSKKKS) is disordered. Residues 437-447 (NHQNQQQSNAN) show a composition bias toward low complexity.

The protein belongs to the class-I pyridoxal-phosphate-dependent aminotransferase family. As to quaternary structure, homodimer. Pyridoxal 5'-phosphate serves as cofactor.

It carries out the reaction S-adenosyl-L-methionine = 1-aminocyclopropane-1-carboxylate + S-methyl-5'-thioadenosine + H(+). It functions in the pathway alkene biosynthesis; ethylene biosynthesis via S-adenosyl-L-methionine; ethylene from S-adenosyl-L-methionine: step 1/2. In terms of biological role, catalyzes the formation of 1-aminocyclopropane-1-carboxylate, a direct precursor of ethylene in higher plants. In Solanum lycopersicum (Tomato), this protein is 1-aminocyclopropane-1-carboxylate synthase 3 (ACS3).